Here is a 468-residue protein sequence, read N- to C-terminus: E3 ubiquitin-protein ligase TRIM11 (468 aa).

The RING-type zinc-finger motif lies at 16–57 (CAICLDYFTDPVMTDCGHNFCRECIRRCWGQPEGPYACPECR). Ser85 is modified (phosphoserine). The B box-type zinc-finger motif lies at 87–128 (VPQGVCAAHREPLAAFCGDELRLLCAACERSGEHWAHRVRPL). Positions 92, 95, 114, and 120 each coordinate Zn(2+). A coiled-coil region spans residues 128-233 (LQDAAEDLKS…QLAELITELE (106 aa)). One can recognise a B30.2/SPRY domain in the interval 268–461 (EMRTVCRVPG…MTICRLKGGP (194 aa)). A Glycyl lysine isopeptide (Lys-Gly) (interchain with G-Cter in ubiquitin) cross-link involves residue Lys458.

The protein belongs to the TRIM/RBCC family. Binds cytoplasmic tail of integrin alpha-1. Interacts with the HN peptide. Interacts with PHOX2B. Interacts (when autoubiquitinated) with SQSTM1/p62; promoting AIM2 recruitment to autophagosomes. Interacts with AIM2; promoting its autophagy-dependent degradation. Post-translationally, autoubiquitinated upon DNA stimulation; autoubiquitination promotes interaction with SQSTM1/p62 and recruitment of AIM2 to autophagosomes.

The protein resides in the cytoplasm. Its subcellular location is the nucleus. The enzyme catalyses S-ubiquitinyl-[E2 ubiquitin-conjugating enzyme]-L-cysteine + [acceptor protein]-L-lysine = [E2 ubiquitin-conjugating enzyme]-L-cysteine + N(6)-ubiquitinyl-[acceptor protein]-L-lysine.. Its pathway is protein modification; protein ubiquitination. In terms of biological role, E3 ubiquitin-protein ligase that promotes the degradation of insoluble ubiquitinated proteins, including insoluble PAX6, poly-Gln repeat expanded HTT and poly-Ala repeat expanded ARX. Mediates PAX6 ubiquitination leading to proteasomal degradation, thereby modulating cortical neurogenesis. May also inhibit PAX6 transcriptional activity, possibly in part by preventing the binding of PAX6 to its consensus sequences. May contribute to the regulation of the intracellular level of HN (humanin) or HN-containing proteins through the proteasomal degradation pathway. Mediates MED15 ubiquitination leading to proteasomal degradation. May contribute to the innate restriction of retroviruses. Upon overexpression, reduces HIV-1 and murine leukemia virus infectivity, by suppressing viral gene expression. Antiviral activity depends on a functional E3 ubiquitin-protein ligase domain. May regulate TRIM5 turnover via the proteasome pathway, thus counteracting the TRIM5-mediated cross-species restriction of retroviral infection at early stages of the retroviral life cycle. Acts as an inhibitor of the AIM2 inflammasome by promoting autophagy-dependent degradation of AIM2. Mechanistically, undergoes autoubiquitination upon DNA stimulation, promoting interaction with AIM2 and SQSTM1/p62, leading to AIM2 recruitment to autophagosomes. In Bos taurus (Bovine), this protein is E3 ubiquitin-protein ligase TRIM11 (TRIM11).